Reading from the N-terminus, the 670-residue chain is UvrABC system protein B (670 aa).

The region spanning 26 to 183 (NGLKSGLAFQ…QRLVDLQYNR (158 aa)) is the Helicase ATP-binding domain. 39–46 (GVTGSGKT) contributes to the ATP binding site. The Beta-hairpin signature appears at 92-115 (YYDYYQPEAYVPSSDSFIEKDAAI). The Helicase C-terminal domain occupies 431 to 597 (QVDDLLSEIN…GLSKQVNDVM (167 aa)). A UVR domain is found at 630-665 (LKQIALSEKQMFACAKNLEFEKAALFRDEVTKLHEQ).

Belongs to the UvrB family. As to quaternary structure, forms a heterotetramer with UvrA during the search for lesions. Interacts with UvrC in an incision complex.

The protein localises to the cytoplasm. The UvrABC repair system catalyzes the recognition and processing of DNA lesions. A damage recognition complex composed of 2 UvrA and 2 UvrB subunits scans DNA for abnormalities. Upon binding of the UvrA(2)B(2) complex to a putative damaged site, the DNA wraps around one UvrB monomer. DNA wrap is dependent on ATP binding by UvrB and probably causes local melting of the DNA helix, facilitating insertion of UvrB beta-hairpin between the DNA strands. Then UvrB probes one DNA strand for the presence of a lesion. If a lesion is found the UvrA subunits dissociate and the UvrB-DNA preincision complex is formed. This complex is subsequently bound by UvrC and the second UvrB is released. If no lesion is found, the DNA wraps around the other UvrB subunit that will check the other stand for damage. The polypeptide is UvrABC system protein B (Psychromonas ingrahamii (strain DSM 17664 / CCUG 51855 / 37)).